The following is a 127-amino-acid chain: UPF0102 protein Glov_2230 (127 aa).

Belongs to the UPF0102 family.

The polypeptide is UPF0102 protein Glov_2230 (Trichlorobacter lovleyi (strain ATCC BAA-1151 / DSM 17278 / SZ) (Geobacter lovleyi)).